A 296-amino-acid chain; its full sequence is Phosphatidylglycerol--prolipoprotein diacylglyceryl transferase (296 aa).

The next 4 membrane-spanning stretches (helical) occupy residues 10-30 (IAFS…LAAF), 57-77 (LLFY…MLFY), 92-112 (VWEG…ACWL), and 119-139 (LHFF…LGFG). Arg-140 serves as a coordination point for a 1,2-diacyl-sn-glycero-3-phospho-(1'-sn-glycerol). The next 3 helical transmembrane spans lie at 194–214 (QLYE…TFSM), 220–240 (YALS…VEFV), and 254–274 (WLTM…ALLA).

The protein belongs to the Lgt family.

It localises to the cell inner membrane. The catalysed reaction is L-cysteinyl-[prolipoprotein] + a 1,2-diacyl-sn-glycero-3-phospho-(1'-sn-glycerol) = an S-1,2-diacyl-sn-glyceryl-L-cysteinyl-[prolipoprotein] + sn-glycerol 1-phosphate + H(+). It functions in the pathway protein modification; lipoprotein biosynthesis (diacylglyceryl transfer). In terms of biological role, catalyzes the transfer of the diacylglyceryl group from phosphatidylglycerol to the sulfhydryl group of the N-terminal cysteine of a prolipoprotein, the first step in the formation of mature lipoproteins. The sequence is that of Phosphatidylglycerol--prolipoprotein diacylglyceryl transferase from Xanthomonas oryzae pv. oryzae (strain MAFF 311018).